Reading from the N-terminus, the 831-residue chain is LTLGARGRRTRSPSPTLGESLAPRKGSFSGRLSPAYSLGSLTGASPRQSPHAQRKLSSGDLRVPIPRERKNSITEISDNEDDLLEYHRRQRQERLREQEMERLERQRLETILNLCAEYSRADGGPETGELPSIGEATAALALAGRRPSRGLAGAIVVSGRSGEESGGASQRLWESMERSDEENLKEECSSTESTQQEHEDAPSTKLQGEVLAVEEERAQVLGRVEQLKVRVKELEQQLQEAAREAEMERALLQGEREAERALLQKEQRAMDQLQEKLVALETGIQKERDKEADALETETKLFEDLEFQQLERESRVEEERELAGQGLLRSKAELLRSVSKRKERLAVLDSQAGQIRAQAVQESERLAREKNAVLQLLQKEKEKLTVLERRYHSLTGGRPFPKTTSTLKEVYRSKMNGDMASPLPRTRSGPLPSSSGSSSSSSQLSVATLGRSPSPKSALLAQNGTSSLPRNLAATLQDIETKRQLALQQKVELPPAEPLSPEDPAGHQVIEEQRRRLAELKQKAAAEAQCQWDALHGAAAFPAGPSGFPTLMHHSILHHLPAGRERGEEGEHAYDTLSLESSDSMETSISTGGNSACSPDNMSSASGLDMGKIEEMEKMLKEAHAEKSRLMESREREMELRRQALEEERRRREQVERRLQSESARRQQLVEKEVKLREKQFSQARPLTRYLPNRKEDFDLKTHIESSGHGVDTCLHVVLSSKVCRGYLIKMGGKIKSWKKRWFVFDRLKRTLSYYVDKHETKLKGVIYFQAIEEVYYDHLRSAAKSPNPALTFCVKTHDRLYYMVAPSAEAMRIWMDVIVTGAEGYTQFMN.

Residues 1 to 11 are compositionally biased toward basic residues; the sequence is LTLGARGRRTR. Residues 1 to 73 are disordered; it reads LTLGARGRRT…PIPRERKNSI (73 aa). Position 6 is an omega-N-methylarginine (Arg6). Phosphoserine occurs at positions 12 and 14. Thr16 bears the Phosphothreonine mark. Residues Ser27, Ser33, Ser45, Ser49, Ser57, Ser72, Ser77, and Ser175 each carry the phosphoserine modification. The span at 39-51 shows a compositional bias: polar residues; that stretch reads GSLTGASPRQSPH. Disordered regions lie at residues 160-209 and 416-465; these read RSGE…LQGE and NGDM…QNGT. Basic and acidic residues predominate over residues 174–188; sequence ESMERSDEENLKEEC. Residues 180-306 are a coiled coil; it reads DEENLKEECS…TETKLFEDLE (127 aa). 2 positions are modified to phosphoserine: Ser421 and Ser467. Over residues 421–442 the composition is skewed to low complexity; that stretch reads SPLPRTRSGPLPSSSGSSSSSS. Positions 584 to 603 are disordered; it reads SMETSISTGGNSACSPDNMS. Residues 610–676 adopt a coiled-coil conformation; the sequence is MGKIEEMEKM…QQLVEKEVKL (67 aa). One can recognise a PH domain in the interval 721 to 824; the sequence is SKVCRGYLIK…WMDVIVTGAE (104 aa).

The chain is Pleckstrin homology-like domain family B member 1 (Phldb1) from Rattus norvegicus (Rat).